The following is a 252-amino-acid chain: Imidazole glycerol phosphate synthase subunit HisF (252 aa).

Residues aspartate 11 and aspartate 130 contribute to the active site.

The protein belongs to the HisA/HisF family. In terms of assembly, heterodimer of HisH and HisF.

It localises to the cytoplasm. The catalysed reaction is 5-[(5-phospho-1-deoxy-D-ribulos-1-ylimino)methylamino]-1-(5-phospho-beta-D-ribosyl)imidazole-4-carboxamide + L-glutamine = D-erythro-1-(imidazol-4-yl)glycerol 3-phosphate + 5-amino-1-(5-phospho-beta-D-ribosyl)imidazole-4-carboxamide + L-glutamate + H(+). It functions in the pathway amino-acid biosynthesis; L-histidine biosynthesis; L-histidine from 5-phospho-alpha-D-ribose 1-diphosphate: step 5/9. Functionally, IGPS catalyzes the conversion of PRFAR and glutamine to IGP, AICAR and glutamate. The HisF subunit catalyzes the cyclization activity that produces IGP and AICAR from PRFAR using the ammonia provided by the HisH subunit. The polypeptide is Imidazole glycerol phosphate synthase subunit HisF (Bacillus velezensis (strain DSM 23117 / BGSC 10A6 / LMG 26770 / FZB42) (Bacillus amyloliquefaciens subsp. plantarum)).